The chain runs to 209 residues: Uracil phosphoribosyltransferase (209 aa).

5-phospho-alpha-D-ribose 1-diphosphate is bound by residues arginine 79, arginine 104, and 131-139 (DPMLATGGS). Uracil-binding positions include isoleucine 194 and 199-201 (GDA). Aspartate 200 is a 5-phospho-alpha-D-ribose 1-diphosphate binding site.

This sequence belongs to the UPRTase family. Requires Mg(2+) as cofactor.

It carries out the reaction UMP + diphosphate = 5-phospho-alpha-D-ribose 1-diphosphate + uracil. It participates in pyrimidine metabolism; UMP biosynthesis via salvage pathway; UMP from uracil: step 1/1. Allosterically activated by GTP. Functionally, catalyzes the conversion of uracil and 5-phospho-alpha-D-ribose 1-diphosphate (PRPP) to UMP and diphosphate. This is Uracil phosphoribosyltransferase from Listeria monocytogenes serovar 1/2a (strain ATCC BAA-679 / EGD-e).